Here is a 165-residue protein sequence, read N- to C-terminus: MASDYSFDIVSEVNLPEVKNAVNQALKEISQRYDFKGSNVEIELNEKEKEIRITADDEYRLKRAVDVLEAKLVKRQVSLKFLDYGKIEPALGGTVKQTIKLKSGIPREKAKEIIDTIKQTKLKVQTQILDDKLRVSGKKKDDLQAVIKLLKEKEFGLVLQFTNYR.

It belongs to the YajQ family.

Functionally, nucleotide-binding protein. This is Nucleotide-binding protein CHY_1197 from Carboxydothermus hydrogenoformans (strain ATCC BAA-161 / DSM 6008 / Z-2901).